The following is a 63-amino-acid chain: MANPKAKMSKSRRDKRRAQFNARTKAAVTVVCPNCGEPTLPHRACRHCGHYKGRQVTGKSVVA.

The segment at 1–20 (MANPKAKMSKSRRDKRRAQF) is disordered. Basic residues predominate over residues 7–18 (KMSKSRRDKRRA).

It belongs to the bacterial ribosomal protein bL32 family.

This Chlorobaculum tepidum (strain ATCC 49652 / DSM 12025 / NBRC 103806 / TLS) (Chlorobium tepidum) protein is Large ribosomal subunit protein bL32.